A 560-amino-acid polypeptide reads, in one-letter code: Probable pectinesterase/pectinesterase inhibitor 20 (560 aa).

The first 24 residues, 1–24, serve as a signal peptide directing secretion; the sequence is MSQKLMFLFTLACLSSLPSPFISA. Positions 25–179 are pectinesterase inhibitor 20; the sequence is QIPAIGNATS…TKLYGVSLAL (155 aa). Residues Asn-31, Asn-168, Asn-251, Asn-255, Asn-268, Asn-307, and Asn-314 are each glycosylated (N-linked (GlcNAc...) asparagine). The segment at 246–544 is pectinesterase 20; sequence VTVIQNGTGN…FTVTNFLVGE (299 aa). Thr-323 contributes to the substrate binding site. Asn-340 carries N-linked (GlcNAc...) asparagine glycosylation. A substrate-binding site is contributed by Gln-353. Catalysis depends on Asp-376, which acts as the Proton donor; for pectinesterase activity. A disulfide bridge connects residues Cys-390 and Cys-410. The active-site Nucleophile; for pectinesterase activity is the Asp-397. Residues 417–441 are disordered; that stretch reads PRKGQSNEVTAQGRTDPNQNTGTAI. Residues 419-439 show a composition bias toward polar residues; sequence KGQSNEVTAQGRTDPNQNTGT. N-linked (GlcNAc...) asparagine glycosylation is present at Asn-456. Residues Arg-465 and Trp-467 each contribute to the substrate site. Asn-507, Asn-528, and Asn-534 each carry an N-linked (GlcNAc...) asparagine glycan.

This sequence in the N-terminal section; belongs to the PMEI family. The protein in the C-terminal section; belongs to the pectinesterase family. As to expression, expressed in flower buds.

It localises to the secreted. The protein resides in the cell wall. It catalyses the reaction [(1-&gt;4)-alpha-D-galacturonosyl methyl ester](n) + n H2O = [(1-&gt;4)-alpha-D-galacturonosyl](n) + n methanol + n H(+). It functions in the pathway glycan metabolism; pectin degradation; 2-dehydro-3-deoxy-D-gluconate from pectin: step 1/5. In terms of biological role, acts in the modification of cell walls via demethylesterification of cell wall pectin. The sequence is that of Probable pectinesterase/pectinesterase inhibitor 20 (PME20) from Arabidopsis thaliana (Mouse-ear cress).